The chain runs to 176 residues: Interleukin-19 (176 aa).

A signal peptide spans 1 to 24; sequence MKTQCASTWLLGMTLILCSVHIYS. 3 disulfide bridges follow: cysteine 28/cysteine 120, cysteine 74/cysteine 126, and cysteine 75/cysteine 128. Asparagine 56 is a glycosylation site (N-linked (GlcNAc...) asparagine). Asparagine 127 and asparagine 134 each carry an N-linked (GlcNAc...) asparagine glycan.

This sequence belongs to the IL-10 family.

Its subcellular location is the secreted. In terms of biological role, cytokine that functions as an anti-inflammatory and proangiogenic factor. Polarizes adaptive immunity to an anti-inflammatory phenotype through induction of T-helper 2 responses by both down-regulation of IFN-gamma and up-regulation of IL4 and IL5. Produced by osteocytes, stimulates granulopoiesis and neutrophil formation. Exerts its biological effect through a receptor complex consisting of a heterodimer of IL20RA and IL20RB. In turn, activates the Janus kinase (JAK) and signal transducer and activator of transcription (STAT) pathway, and importantly, STAT3. The polypeptide is Interleukin-19 (Il19) (Mus musculus (Mouse)).